Here is a 101-residue protein sequence, read N- to C-terminus: Diptericin-D (101 aa).

Positions 1–18 (MKLFYLLVICALSLAVMA) are cleaved as a signal peptide. Thr28 and Thr72 each carry an O-linked (GalNAc...) threonine glycan. Residue Phe100 is modified to Phenylalanine amide.

This sequence belongs to the attacin/sarcotoxin-2 family.

Has activity against E.coli. The chain is Diptericin-D from Protophormia terraenovae (Northern blowfly).